The primary structure comprises 376 residues: Chaperone protein DnaJ (376 aa).

Residues 5 to 70 (DYYEVLGVAR…NKRRAYDAHG (66 aa)) form the J domain. The CR-type zinc-finger motif lies at 132–209 (GIERRIEIPT…CHGAGRVEEN (78 aa)). Positions 145, 148, 161, 164, 183, 186, 197, and 200 each coordinate Zn(2+). 4 CXXCXGXG motif repeats span residues 145–152 (CVSCHGSG), 161–168 (CGTCHGRG), 183–190 (CPHCDGRG), and 197–204 (CKTCHGAG).

The protein belongs to the DnaJ family. In terms of assembly, homodimer. Zn(2+) is required as a cofactor.

The protein resides in the cytoplasm. Functionally, participates actively in the response to hyperosmotic and heat shock by preventing the aggregation of stress-denatured proteins and by disaggregating proteins, also in an autonomous, DnaK-independent fashion. Unfolded proteins bind initially to DnaJ; upon interaction with the DnaJ-bound protein, DnaK hydrolyzes its bound ATP, resulting in the formation of a stable complex. GrpE releases ADP from DnaK; ATP binding to DnaK triggers the release of the substrate protein, thus completing the reaction cycle. Several rounds of ATP-dependent interactions between DnaJ, DnaK and GrpE are required for fully efficient folding. Also involved, together with DnaK and GrpE, in the DNA replication of plasmids through activation of initiation proteins. This chain is Chaperone protein DnaJ, found in Xanthomonas oryzae pv. oryzae (strain PXO99A).